Consider the following 182-residue polypeptide: ATP synthase subunit delta (182 aa).

This sequence belongs to the ATPase delta chain family. F-type ATPases have 2 components, F(1) - the catalytic core - and F(0) - the membrane proton channel. F(1) has five subunits: alpha(3), beta(3), gamma(1), delta(1), epsilon(1). F(0) has three main subunits: a(1), b(2) and c(10-14). The alpha and beta chains form an alternating ring which encloses part of the gamma chain. F(1) is attached to F(0) by a central stalk formed by the gamma and epsilon chains, while a peripheral stalk is formed by the delta and b chains.

It localises to the cell membrane. Functionally, f(1)F(0) ATP synthase produces ATP from ADP in the presence of a proton or sodium gradient. F-type ATPases consist of two structural domains, F(1) containing the extramembraneous catalytic core and F(0) containing the membrane proton channel, linked together by a central stalk and a peripheral stalk. During catalysis, ATP synthesis in the catalytic domain of F(1) is coupled via a rotary mechanism of the central stalk subunits to proton translocation. This protein is part of the stalk that links CF(0) to CF(1). It either transmits conformational changes from CF(0) to CF(1) or is implicated in proton conduction. The polypeptide is ATP synthase subunit delta (Lactobacillus johnsonii (strain CNCM I-12250 / La1 / NCC 533)).